The sequence spans 303 residues: tRNA pseudouridine synthase B (303 aa).

The active-site Nucleophile is the D38.

It belongs to the pseudouridine synthase TruB family. Type 1 subfamily.

The enzyme catalyses uridine(55) in tRNA = pseudouridine(55) in tRNA. Functionally, responsible for synthesis of pseudouridine from uracil-55 in the psi GC loop of transfer RNAs. This is tRNA pseudouridine synthase B from Oceanobacillus iheyensis (strain DSM 14371 / CIP 107618 / JCM 11309 / KCTC 3954 / HTE831).